A 255-amino-acid chain; its full sequence is Arginine-binding extracellular protein ArtP (255 aa).

A signal peptide spans 1 to 19; that stretch reads MKKWLLLLVAACITFALTA. The N-palmitoyl cysteine moiety is linked to residue C20. C20 carries the S-diacylglycerol cysteine lipid modification.

This sequence belongs to the bacterial solute-binding protein 3 family.

The protein resides in the cell membrane. Functionally, part of a binding-protein-dependent transport system for arginine. In Bacillus subtilis (strain 168), this protein is Arginine-binding extracellular protein ArtP (artP).